A 662-amino-acid polypeptide reads, in one-letter code: MEARLVWGVLVGPLRVLCVLCCLLGHAIAAPSPIIKFPGDVSPKTDKELAVQYLNTFYGCPKESCNLFVLKDTLKKMQKFFGLPQTGDLDQNTIETMRKPRCGNPDVANYNFFPRKPKWDKNQITYRIIGYTPDLDPETVDDAFARALKVWSDVTPLRFSRIHDGEADIMINFGRWEHGDGYPFDGKDGLLAHAFAPGTGVGGDSHFDDDELWTLGEGQVVRVKYGNADGEYCKFPFLFNGREYSSCTDTGRSDGFLWCSTTYNFEKDGKYGFCPHEALFTMGGNGDGQPCKFPFRFQGTSYNSCTTEGRTDGYRWCGTTEDYDRDKKYGFCPETAMSTVGGNSEGAPCVFPFTFLGNKYESCTSAGRSDGKVWCATTTNYDDDRKWGFCPDQGYSLFLVAAHEFGHAMGLEHSQDPGALMAPIYTYTKNFRLSNDDIKGIQELYGPSPDADTDTGTGPTPTLGPVTPEICKQDIVFDGIAQIRGEIFFFKDRFIWRTVTPRDKPTGPLLVATFWPELPEKIDAVYEAPQEEKAVFFAGNEYWVYSASTLERGYPKPLTSLGLPPDVQQVDAAFNWSKNKKTYIFSGDKFWRYNEVKKKMDPGFPKLIADSWNAIPDNLDAVVDLQGGGHSYFFKGAYYLKLENQSLKSVKFGSIKSDWLGC.

The signal sequence occupies residues 1 to 29 (MEARLVWGVLVGPLRVLCVLCCLLGHAIA). The propeptide at 30–109 (APSPIIKFPG…PRCGNPDVAN (80 aa)) is activation peptide. The Cysteine switch signature appears at 100–107 (PRCGNPDV). C102 contacts Zn(2+). The interval 110–221 (YNFFPRKPKW…LWTLGEGQVV (112 aa)) is collagenase-like 1. Residues D134 and D168 each contribute to the Ca(2+) site. Zn(2+) contacts are provided by H178 and D180. Ca(2+)-binding residues include D185 and G186. Zn(2+) is bound at residue H193. Residues G200, G202, and D204 each contribute to the Ca(2+) site. A Zn(2+)-binding site is contributed by H206. Ca(2+) is bound by residues D208, D209, and E211. The interval 222–396 (RVKYGNADGE…WGFCPDQGYS (175 aa)) is collagen-binding. Fibronectin type-II domains are found at residues 228–276 (ADGE…FCPH), 286–334 (GDGQ…FCPE), and 344–392 (SEGA…FCPD). Cystine bridges form between C233–C259, C247–C274, C291–C317, C305–C332, C349–C375, and C363–C390. Positions 397–467 (LFLVAAHEFG…GPTPTLGPVT (71 aa)) are collagenase-like 2. H403 is a binding site for Zn(2+). E404 is a catalytic residue. Zn(2+)-binding residues include H407 and H413. Positions 414–662 (SQDPGALMAP…GSIKSDWLGC (249 aa)) are required for inhibitor TIMP2 binding. C471 and C662 are disulfide-bonded. 4 Hemopexin repeats span residues 474 to 518 (DIVF…WPEL), 519 to 565 (PEKI…GLPP), 567 to 615 (VQQV…WNAI), and 616 to 662 (PDNL…WLGC). Positions 478, 523, and 571 each coordinate Ca(2+). A glycan (N-linked (GlcNAc...) asparagine) is linked at N575. Residue D620 coordinates Ca(2+). N644 is a glycosylation site (N-linked (GlcNAc...) asparagine).

Belongs to the peptidase M10A family. As to quaternary structure, interacts (via the C-terminal hemopexin-like domains-containing region) with the integrin alpha-V/beta-3; the interaction promotes vascular invasion in angiogenic vessels and melamoma cells. Interacts (via the C-terminal PEX domain) with TIMP2 (via the C-terminal); the interaction inhibits the degradation activity. Interacts with GSK3B. Ca(2+) serves as cofactor. Zn(2+) is required as a cofactor. Post-translationally, phosphorylation on multiple sites modulates enzymatic activity. Phosphorylated by PKC in vitro. In terms of processing, the propeptide is processed by MMP14 (MT-MMP1) and MMP16 (MT-MMP3). Autocatalytic cleavage in the C-terminal produces the anti-angiogenic peptide, PEX. This processing appears to be facilitated by binding integrin integrinv/beta3.

It localises to the secreted. The protein localises to the extracellular space. Its subcellular location is the extracellular matrix. The protein resides in the membrane. It is found in the nucleus. It carries out the reaction Cleavage of gelatin type I and collagen types IV, V, VII, X. Cleaves the collagen-like sequence Pro-Gln-Gly-|-Ile-Ala-Gly-Gln.. Ubiquitinous metalloproteinase that is involved in diverse functions such as remodeling of the vasculature, angiogenesis, tissue repair, tumor invasion, inflammation, and atherosclerotic plaque rupture. As well as degrading extracellular matrix proteins, can also act on several nonmatrix proteins such as big endothelial 1 and beta-type CGRP promoting vasoconstriction. Also cleaves KISS at a Gly-|-Leu bond. Appears to have a role in myocardial cell death pathways. Contributes to myocardial oxidative stress by regulating the activity of GSK3beta. Cleaves GSK3beta in vitro. Involved in the formation of the fibrovascular tissues. In terms of biological role, PEX, the C-terminal non-catalytic fragment of MMP2, possesses anti-angiogenic and anti-tumor properties and inhibits cell migration and cell adhesion to FGF2 and vitronectin. Ligand for integrin alpha-v/beta3 on the surface of blood vessels. The chain is 72 kDa type IV collagenase (Mmp2) from Rattus norvegicus (Rat).